Reading from the N-terminus, the 422-residue chain is Probable Na(+)/H(+) antiporter 2 (422 aa).

13 consecutive transmembrane segments (helical) span residues 3–23 (IVLFLGYLSILFAGGAIIAKI), 28–48 (GIPDIPLLLIFGLILSILNVI), 52–72 (IVESSFDFIGNFGLIILLFIG), 93–113 (ILALLIVWIISGIVFNFVFHL), 119–139 (IGLLFGAIVSATDPATLIPIF), 157–177 (VFNDPLGIVVTLICLSALGLA), 183–203 (ILEFFSLAVGGIILGVIAGKF), 216–236 (YIAPFTLGLAIAFWYFAEGIF), 242–262 (YEISGFMAVAIMGLYIGNVIV), 281–301 (LSIFIRILIFVLLGASISIPL), 307–327 (LPAFLCALGSILLARPVGVLI), 341–361 (IYLALEGPRGVVPATLAAMVY), and 384–404 (LAGTILVATFMTIIVSVVLEA).

The protein belongs to the monovalent cation:proton antiporter 1 (CPA1) transporter (TC 2.A.36) family.

The protein localises to the cell membrane. Functionally, this is probably a Na(+)/H(+) antiporter. This Methanocaldococcus jannaschii (strain ATCC 43067 / DSM 2661 / JAL-1 / JCM 10045 / NBRC 100440) (Methanococcus jannaschii) protein is Probable Na(+)/H(+) antiporter 2.